We begin with the raw amino-acid sequence, 1293 residues long: DNA repair protein complementing XP-C cells homolog (1293 aa).

5 disordered regions span residues 1-199, 217-239, 255-341, 514-640, and 658-919; these read MSDE…FEDK, ERTR…QAAT, QSVE…NISG, DLIP…SKCL, and LSSK…EPAK. Basic and acidic residues predominate over residues 18–30; it reads DEWKPSKDVKGGE. Ser31, Ser32, and Ser37 each carry phosphoserine. Positions 31-43 are enriched in acidic residues; the sequence is SSDDDDSDFDELQ. The segment covering 51-60 has biased composition (low complexity); it reads SSGRSSAVAG. Polar residues-rich tracts occupy residues 101–130 and 226–238; these read FPTS…SGAR and RNVT…SQAA. Positions 288–301 are enriched in basic residues; the sequence is SKTKSTRIKRHTKT. Residues 313–335 are compositionally biased toward acidic residues; it reads DTDDSDFEEVADADLSSDQDDGE. Basic and acidic residues predominate over residues 520–578; the sequence is LRPDDKNKSQTVESERESEDEKPKKDKKAGKPAEKESSKSTISKEAEKKNNAKKAEAKP. Phosphoserine is present on residues Ser533 and Ser537. Residues 580 to 594 show a composition bias toward low complexity; the sequence is SKSTTKGSETTKSGT. The segment covering 598–612 has biased composition (basic and acidic residues); the sequence is VKKELSLSSKLVEKS. Over residues 658–692 the composition is skewed to low complexity; the sequence is LSSKLVLKSKNQSSFSSNKSDTSFEENPSTSSSSK. Residues 693–711 are compositionally biased toward basic and acidic residues; that stretch reads SLKEETAKLSSSKLEDKKV. Residues 720-737 show a composition bias toward polar residues; the sequence is KVQSSLLKRVTTQNISES. The span at 806 to 818 shows a compositional bias: basic and acidic residues; sequence HLQEQRNTRETRS. 2 positions are modified to phosphoserine: Ser908 and Ser911. 3 consecutive short sequence motifs (nuclear localization signal) follow at residues 922–938, 1195–1211, and 1275–1291; these read KKAP…RKDR, KKTV…ICKK, and KKLI…KKKY.

This sequence belongs to the XPC family. As to quaternary structure, heterodimer.

It localises to the nucleus. Functionally, involved in DNA excision repair. May play a part in DNA damage recognition and/or in altering chromatin structure to allow access by damage-processing enzymes. Involved in nucleotide excision repair of DNA damaged with UV light, bulky adducts, or cross-linking agents. This chain is DNA repair protein complementing XP-C cells homolog, found in Drosophila melanogaster (Fruit fly).